A 483-amino-acid chain; its full sequence is FK506-binding protein 4 (483 aa).

Disordered stretches follow at residues 41–171 (TAEP…EEFV) and 208–371 (TGNY…LKKP). The segment covering 68-93 (EEDDDEYLDIDGEDSEDDEESDDEEV) has biased composition (acidic residues). Composition is skewed to basic and acidic residues over residues 108-121 (REAA…ATKE) and 130-150 (ADAK…KASE). Composition is skewed to acidic residues over residues 151-167 (SDDE…EPNF), 216-233 (GQDE…DEEY), and 241-256 (LESD…DEID). Basic and acidic residues-rich tracts occupy residues 298-309 (LVAKDKKQAEKQ), 323-344 (ENKD…KDLE), and 351-370 (AKDK…DLKK). One can recognise a PPIase FKBP-type domain in the interval 397 to 483 (GDRVSLRYIG…VFDIKLLEIK (87 aa)).

This sequence belongs to the FKBP-type PPIase family. FKBP3/4 subfamily. As to quaternary structure, binds to histones H3 and H4.

The protein resides in the nucleus. The enzyme catalyses [protein]-peptidylproline (omega=180) = [protein]-peptidylproline (omega=0). PPIase that acts as a histone chaperone. Histone proline isomerase that increases the rate of cis-trans isomerization at prolines on the histone H3 N-terminal tail. Proline isomerization influences H3 methylation thereby regulating gene expression. This is FK506-binding protein 4 (FPR4) from Chaetomium thermophilum (strain DSM 1495 / CBS 144.50 / IMI 039719) (Thermochaetoides thermophila).